Here is a 705-residue protein sequence, read N- to C-terminus: Gamma-adducin (705 aa).

Polar residues predominate over residues 1–10 (MSSDTSQAVI). The interval 1-22 (MSSDTSQAVITTPPPPSMPHKE) is disordered. Position 2 is an N-acetylserine (S2). 8 positions are modified to phosphoserine: S31, S42, S64, S402, S414, S423, S442, and S461. Disordered stretches follow at residues 472–495 (EDPS…VPLN), 535–556 (PSTM…PFSH), 572–612 (KQQG…EENH), and 658–705 (EITI…KVEA). Residue K484 forms a Glycyl lysine isopeptide (Lys-Gly) (interchain with G-Cter in SUMO2) linkage. Phosphoserine is present on residues S583, S585, S590, S672, S676, S678, and S680. Residues 590–605 (SVSQIQSQTQSPQSVP) show a composition bias toward low complexity. The segment covering 681–705 (PSKKKKKFRTPSFLKKNKKKEKVEA) has biased composition (basic residues). Residue S682 is modified to Phosphoserine; by PKC. Positions 683 to 700 (KKKKKFRTPSFLKKNKKK) are interaction with calmodulin.

It belongs to the aldolase class II family. Adducin subfamily. As to quaternary structure, heterodimer of an alpha and a gamma subunit. Sumoylated. Post-translationally, proteolytically cleaved by asparagine endopeptidase (AEP) into 2 fragments. Overexpression of the 1-357 fragment induces neuronal apoptosis, and overexpression of either 1-357 or 358-706 fragment increases the degeneration of dendritic spines. Overexpression of the 1-357 fragment impairs neurite outgrowth by downregulating the expression of Rac2, and induces synaptic dysfunction and cognitive impairments in tau P301S transgenic mice, a mouse model for Alzheimer disease (AD). Expressed in kidney, brain, spleen, liver and heart. As to expression, expressed in renal interlobular arteries, afferent/efferent arterioles, parietal glomerular epithelial cells and microvilli of the luminal surface of the proximal tubule (at protein level). Expressed in podocytes (at protein level) Expressed in renal cortex (at protein level). Expressed in primary vascular smooth muscle cells (VSMCs) of the kidney (at protein level). Expressed in tubular cells and glomeruli (at protein level).

It localises to the cytoplasm. The protein localises to the cytoskeleton. The protein resides in the cell membrane. Its function is as follows. Membrane-cytoskeleton-associated protein that promotes the assembly of the spectrin-actin network. Plays a role in actin filament capping. Binds to calmodulin. Involved in myogenic reactivity of the renal afferent arteriole (Af-art), renal interlobular arteries and middle cerebral artery (MCA) to increased perfusion pressure. Involved in regulation of potassium channels in the vascular smooth muscle cells (VSMCs) of the Af-art and MCA ex vivo. Involved in regulation of glomerular capillary pressure, glomerular filtration rate (GFR) and glomerular nephrin expression in response to hypertension. Involved in renal blood flow (RBF) autoregulation. Plays a role in podocyte structure and function. Regulates globular monomer actin (G-actin) and filamentous polymer actin (F-actin) ratios in the primary podocytes affecting actin cytoskeleton organization. Regulates expression of synaptopodin, RhoA, Rac1 and CDC42 in the renal cortex and the primary podocytes. Regulates expression of nephrin in the glomeruli and in the primary podocytes, expression of nephrin and podocinin in the renal cortex, and expression of focal adhesion proteins integrin alpha-3 and integrin beta-1 in the glomeruli. Involved in cell migration and cell adhesion of podocytes, and in podocyte foot process effacement. Regulates expression of profibrotics markers MMP2, MMP9, TGF beta-1, tubular tight junction protein E-cadherin, and mesenchymal markers vimentin and alpha-SMA. Promotes the growth of neurites. The chain is Gamma-adducin (Add3) from Rattus norvegicus (Rat).